The following is a 158-amino-acid chain: SsrA-binding protein (158 aa).

Residues 132–158 (KKTHDKRETEKKRDWNREKARLMRDKG) form a disordered region. Residues 136–158 (DKRETEKKRDWNREKARLMRDKG) show a composition bias toward basic and acidic residues.

This sequence belongs to the SmpB family.

The protein localises to the cytoplasm. In terms of biological role, required for rescue of stalled ribosomes mediated by trans-translation. Binds to transfer-messenger RNA (tmRNA), required for stable association of tmRNA with ribosomes. tmRNA and SmpB together mimic tRNA shape, replacing the anticodon stem-loop with SmpB. tmRNA is encoded by the ssrA gene; the 2 termini fold to resemble tRNA(Ala) and it encodes a 'tag peptide', a short internal open reading frame. During trans-translation Ala-aminoacylated tmRNA acts like a tRNA, entering the A-site of stalled ribosomes, displacing the stalled mRNA. The ribosome then switches to translate the ORF on the tmRNA; the nascent peptide is terminated with the 'tag peptide' encoded by the tmRNA and targeted for degradation. The ribosome is freed to recommence translation, which seems to be the essential function of trans-translation. This is SsrA-binding protein from Brucella anthropi (strain ATCC 49188 / DSM 6882 / CCUG 24695 / JCM 21032 / LMG 3331 / NBRC 15819 / NCTC 12168 / Alc 37) (Ochrobactrum anthropi).